Reading from the N-terminus, the 466-residue chain is Ribulose bisphosphate carboxylase large chain (466 aa).

At Lys5 the chain carries N6,N6,N6-trimethyllysine. 2 residues coordinate substrate: Asn114 and Thr164. The active-site Proton acceptor is the Lys166. Lys168 serves as a coordination point for substrate. 3 residues coordinate Mg(2+): Lys192, Asp194, and Glu195. Lys192 is subject to N6-carboxylysine. Residue His285 is the Proton acceptor of the active site. Substrate-binding residues include Arg286, His318, and Ser370.

The protein belongs to the RuBisCO large chain family. Type I subfamily. In terms of assembly, heterohexadecamer of 8 large chains and 8 small chains; disulfide-linked. The disulfide link is formed within the large subunit homodimers. Requires Mg(2+) as cofactor. The disulfide bond which can form in the large chain dimeric partners within the hexadecamer appears to be associated with oxidative stress and protein turnover.

The protein localises to the plastid. Its subcellular location is the chloroplast. It carries out the reaction 2 (2R)-3-phosphoglycerate + 2 H(+) = D-ribulose 1,5-bisphosphate + CO2 + H2O. It catalyses the reaction D-ribulose 1,5-bisphosphate + O2 = 2-phosphoglycolate + (2R)-3-phosphoglycerate + 2 H(+). Functionally, ruBisCO catalyzes two reactions: the carboxylation of D-ribulose 1,5-bisphosphate, the primary event in carbon dioxide fixation, as well as the oxidative fragmentation of the pentose substrate in the photorespiration process. Both reactions occur simultaneously and in competition at the same active site. The chain is Ribulose bisphosphate carboxylase large chain from Thespesia populnea (Portia tree).